The following is a 393-amino-acid chain: Dihydrolipoyllysine-residue succinyltransferase component of 2-oxoglutarate dehydrogenase complex (393 aa).

Residues 3 to 78 (RINILVPDLP…KSNQILGNIV (76 aa)) form the Lipoyl-binding domain. Lys-44 carries the N6-lipoyllysine modification. Catalysis depends on residues His-364 and Asp-368.

Belongs to the 2-oxoacid dehydrogenase family. Forms a 24-polypeptide structural core with octahedral symmetry. Part of the 2-oxoglutarate dehydrogenase (OGDH) complex composed of E1 (2-oxoglutarate dehydrogenase), E2 (dihydrolipoamide succinyltransferase) and E3 (dihydrolipoamide dehydrogenase); the complex contains multiple copies of the three enzymatic components (E1, E2 and E3). The cofactor is (R)-lipoate.

It carries out the reaction N(6)-[(R)-dihydrolipoyl]-L-lysyl-[protein] + succinyl-CoA = N(6)-[(R)-S(8)-succinyldihydrolipoyl]-L-lysyl-[protein] + CoA. It participates in amino-acid degradation; L-lysine degradation via saccharopine pathway; glutaryl-CoA from L-lysine: step 6/6. Its function is as follows. E2 component of the 2-oxoglutarate dehydrogenase (OGDH) complex which catalyzes the second step in the conversion of 2-oxoglutarate to succinyl-CoA and CO(2). The sequence is that of Dihydrolipoyllysine-residue succinyltransferase component of 2-oxoglutarate dehydrogenase complex (sucB) from Buchnera aphidicola subsp. Schizaphis graminum (strain Sg).